A 778-amino-acid chain; its full sequence is Dynein axonemal intermediate chain 4 (778 aa).

WD repeat units follow at residues histidine 477–isoleucine 517, leucine 526–aspartate 573, arginine 586–glutamate 629, alanine 633–glycine 673, serine 676–threonine 715, and serine 721–glycine 760.

Part of the multisubunit axonemal dynein complex formed at least of two heavy chains and a number of intermediate and light chains.

The protein resides in the cytoplasm. The protein localises to the cytoskeleton. Its subcellular location is the flagellum axoneme. It is found in the cilium axoneme. It localises to the dynein axonemal particle. Functionally, plays a critical role in the assembly of axonemal dynein complex. Plays a key role in ciliary motility. This Danio rerio (Zebrafish) protein is Dynein axonemal intermediate chain 4.